The chain runs to 443 residues: MFLAQEIIRKKRDGEPLSDEEIRFFINGVYDNTVSEGQIAALAMTIFFHDMDLQERVALTLAMRDSGHTLDWRREALGGPVVDKHSTGGVGDVTSLMLGPMIAACGGFVPMVSGRGLGHTGGTLDKLEAIPGLAIFLDDDAFRSQVKQVGVAIMGQTHSLAPADKRIYATRDITATVDSIPLITASILAKKLAEGLDALVMDVKVGSGALMPTLAGSEALAQAIVGVANGAGCRTIALLTDMNQVLASSAGNALEVREAVRFLTNDERNPRLFEVTMALCSEMLMIAGLAHSEDAARTALVRALDSGEAAERFGRMVAVQGGPADFVQRYDLYLPVATLSKPVFPAGEGYIRSMDTRALGMTVVALGGGRQRARDAIDYSVGLTEMARLGDYVDANTPLAVVHAASEESWARAAEAVRAAIQLGDVAPQALPVVYRRITAAAD.

It belongs to the thymidine/pyrimidine-nucleoside phosphorylase family. In terms of assembly, homodimer.

The enzyme catalyses thymidine + phosphate = 2-deoxy-alpha-D-ribose 1-phosphate + thymine. It functions in the pathway pyrimidine metabolism; dTMP biosynthesis via salvage pathway; dTMP from thymine: step 1/2. In terms of biological role, the enzymes which catalyze the reversible phosphorolysis of pyrimidine nucleosides are involved in the degradation of these compounds and in their utilization as carbon and energy sources, or in the rescue of pyrimidine bases for nucleotide synthesis. The sequence is that of Thymidine phosphorylase from Sodalis glossinidius (strain morsitans).